An 87-amino-acid polypeptide reads, in one-letter code: Putative protein KleG (87 aa).

Disordered regions lie at residues 1–23 (MRHS…WPSS) and 61–87 (IPTT…IFSR). Residues 68–78 (RGRRPQRHRPS) show a composition bias toward basic residues.

This Escherichia coli protein is Putative protein KleG (kleG).